The chain runs to 205 residues: GTP cyclohydrolase-2 (205 aa).

49–53 (RIHSE) is a binding site for GTP. Residues cysteine 54, cysteine 65, and cysteine 67 each contribute to the Zn(2+) site. Residues glutamine 70, 92 to 94 (EGR), and threonine 114 contribute to the GTP site. The Proton acceptor role is filled by aspartate 126. Catalysis depends on arginine 128, which acts as the Nucleophile. GTP-binding residues include threonine 149 and lysine 154.

This sequence belongs to the GTP cyclohydrolase II family. Requires Zn(2+) as cofactor.

It catalyses the reaction GTP + 4 H2O = 2,5-diamino-6-hydroxy-4-(5-phosphoribosylamino)-pyrimidine + formate + 2 phosphate + 3 H(+). It functions in the pathway cofactor biosynthesis; riboflavin biosynthesis; 5-amino-6-(D-ribitylamino)uracil from GTP: step 1/4. Its function is as follows. Catalyzes the conversion of GTP to 2,5-diamino-6-ribosylamino-4(3H)-pyrimidinone 5'-phosphate (DARP), formate and pyrophosphate. In Shewanella woodyi (strain ATCC 51908 / MS32), this protein is GTP cyclohydrolase-2.